A 402-amino-acid polypeptide reads, in one-letter code: Calcium-responsive transactivator (402 aa).

Residues 1-148 (MSVAFASARP…TLPTTSMSMS (148 aa)) form an N-terminal auto-inhibitory domain; necessary for interaction with SMARCA4/BRG1 region. The short motif at 50-53 (YQQI) is the SH2-binding element. Disordered regions lie at residues 72–129 (QSLL…GPNH), 141–170 (PTTS…SVPL), 195–250 (MHQQ…SSQQ), 262–290 (QYGH…YQPA), and 305–402 (TQHY…NYQQ). Positions 92–106 (QSGSAQGLHSQGSLS) are enriched in low complexity. Positions 117 to 129 (SLMQAQIGNGPNH) are enriched in polar residues. Residues 149–237 (GSGHGSGPGY…GGGVMGQRPM (89 aa)) are methionine-rich intra-molecular domain. Residues 196–224 (HQQAASSHYSAAQGGSQHYQGQSMAMMGQ) are compositionally biased toward low complexity. Residues 251–323 (YLGQEEYYGG…SQYSQQQTGY (73 aa)) are MFD domain. Composition is skewed to low complexity over residues 311–379 (GGNS…RASQ) and 390–402 (YGYE…NYQQ). Residues 340–402 (NQQSYPGQQQ…EQGQYGNYQQ (63 aa)) are necessary for nuclear localization. The SH2-binding motif lies at 359 to 362 (SQYS). Positions 377-385 (ASQTGPSTQ) match the SH3-binding motif. Positions 393–402 (EQGQYGNYQQ) are necessary for interaction with CREBBP and for the recruitment of CREBBP to the nuclear bodies. The short motif at 397-400 (YGNY) is the SH2-binding element.

The protein belongs to the SS18 family. Homodimer. Dimerization may be necessary for its function in neuronal dendritic development. Interacts (via C-terminus) with CREBBP (via N-terminus), EP300 and SMARCA4/BRG1. Interacts with the nBAF complex. Association with CREBBP facilitates transcription while the association with SMARCA4/BRG1 suppresses CREST-mediated transcription in resting neurons.

Its subcellular location is the nucleus. It is found in the chromosome. It localises to the centromere. The protein localises to the kinetochore. Transcriptional activator which is required for calcium-dependent dendritic growth and branching in cortical neurons. Recruits CREB-binding protein (CREBBP) to nuclear bodies. Component of the CREST-BRG1 complex, a multiprotein complex that regulates promoter activation by orchestrating a calcium-dependent release of a repressor complex and a recruitment of an activator complex. In resting neurons, transcription of the c-FOS promoter is inhibited by BRG1-dependent recruitment of a phospho-RB1-HDAC1 repressor complex. Upon calcium influx, RB1 is dephosphorylated by calcineurin, which leads to release of the repressor complex. At the same time, there is increased recruitment of CREBBP to the promoter by a CREST-dependent mechanism, which leads to transcriptional activation. The CREST-BRG1 complex also binds to the NR2B promoter, and activity-dependent induction of NR2B expression involves a release of HDAC1 and recruitment of CREBBP. The protein is Calcium-responsive transactivator (SS18L1) of Bos taurus (Bovine).